The sequence spans 243 residues: HTH-type transcriptional repressor NagR (243 aa).

Residues 9-77 (IPIYYQIMEQ…KGRGTFVSKP (69 aa)) enclose the HTH gntR-type domain. Positions 37-56 (EREYAEQFGISRMTVRQALS) form a DNA-binding region, H-T-H motif. Residues 89–90 (FT), 133–135 (RVR), Glu145, 165–167 (SIY), Glu222, and Tyr228 contribute to the alpha-D-glucosamine 6-phosphate site. N-acetyl-D-glucosamine 6-phosphate is bound by residues 89–90 (FT), 133–135 (RVR), Glu145, 165–167 (SIY), Glu222, and Tyr228.

In terms of assembly, homodimer. Forms dimers via the C-terminal effector-binding domain. At high concentrations, probably forms polymers along the DNA.

Its activity is regulated as follows. Binding to DNA is allosterically inhibited by an effector molecule. Binding of the effector to the C-terminal domain leads to a conformational change that modulates binding to DNA and thereby regulates transcription of the target genes. Glucosamine-6-phosphate (GlcN6P) and/or N-acetylglucosamine-6-phosphate (GlcNAc6P) are putative effectors of NagR. Binding of GlcNAc6P may prevent the protein-protein interactions responsible for polymerization along the DNA, but not the specific DNA binding. Its function is as follows. Main transcriptional repressor of genes involved in N-acetylglucosamine (GlcNAc) transport and utilization. Represses the expression of the nagAB and nagP operons by binding directly within their upstream regions. Binds to the DNA consensus sequence 5'-ATTGGTATAGACAACT-3'. Also acts as a weak repressor of mapB expression. In Bacillus subtilis (strain 168), this protein is HTH-type transcriptional repressor NagR.